Here is a 559-residue protein sequence, read N- to C-terminus: Chaperonin GroEL 1 (559 aa).

ATP-binding positions include 29 to 32 (TIGP), 86 to 90 (DGTTT), Gly-413, 476 to 478 (NAL), and Asp-492. The disordered stretch occupies residues 521–541 (KPEPPAPAPAGDGDPMGGMGG).

Belongs to the chaperonin (HSP60) family. As to quaternary structure, forms a cylinder of 14 subunits composed of two heptameric rings stacked back-to-back. Interacts with the co-chaperonin GroES.

It localises to the cytoplasm. The catalysed reaction is ATP + H2O + a folded polypeptide = ADP + phosphate + an unfolded polypeptide.. Its function is as follows. Together with its co-chaperonin GroES, plays an essential role in assisting protein folding. The GroEL-GroES system forms a nano-cage that allows encapsulation of the non-native substrate proteins and provides a physical environment optimized to promote and accelerate protein folding. The chain is Chaperonin GroEL 1 from Synechococcus sp. (strain CC9605).